We begin with the raw amino-acid sequence, 506 residues long: U3 small nucleolar RNA-associated protein 18 homolog (506 aa).

The span at 1–11 (MSSDESSDGLE) shows a compositional bias: acidic residues. 2 disordered regions span residues 1–44 (MSSD…SQAK) and 69–126 (AKSV…PLNH). The segment covering 24–37 (EQEKPAKIKRERYI) has biased composition (basic and acidic residues). A phosphoserine mark is found at serine 102, serine 104, serine 164, and serine 165. 4 WD repeats span residues 203 to 242 (YAEG…NERL), 331 to 370 (KQEG…IEHI), 372 to 413 (MDDG…ASKA), and 469 to 505 (EKVG…YFKG).

Belongs to the WD repeat UTP18 family. In terms of assembly, component of U3 snoRNP complex.

It localises to the nucleus. It is found in the nucleolus. Functionally, component of a nucleolar small nuclear ribonucleoprotein particle (snoRNP) thought to participate in the processing and modification of pre-ribosomal RNA. Regulation of cell size by ribosome synthesis is an important parameter for stem cell maintenance and function. In Drosophila melanogaster (Fruit fly), this protein is U3 small nucleolar RNA-associated protein 18 homolog (wcd).